Consider the following 446-residue polypeptide: Phosphoglucosamine mutase (446 aa).

Serine 100 functions as the Phosphoserine intermediate in the catalytic mechanism. Mg(2+)-binding residues include serine 100, aspartate 239, aspartate 241, and aspartate 243. Residue serine 100 is modified to Phosphoserine.

It belongs to the phosphohexose mutase family. Mg(2+) serves as cofactor. Post-translationally, activated by phosphorylation.

It catalyses the reaction alpha-D-glucosamine 1-phosphate = D-glucosamine 6-phosphate. Functionally, catalyzes the conversion of glucosamine-6-phosphate to glucosamine-1-phosphate. This chain is Phosphoglucosamine mutase, found in Shouchella clausii (strain KSM-K16) (Alkalihalobacillus clausii).